A 116-amino-acid chain; its full sequence is PTS system galactose-specific EIIA component (116 aa).

Residues 11-109 (DDYMGVVMGI…AVEVVGQERR (99 aa)) form the PTS EIIA type-3 domain. Histidine 85 (tele-phosphohistidine intermediate) is an active-site residue. Histidine 85 carries the phosphohistidine; by HPr modification. Aspartate 88 serves as a coordination point for Mg(2+).

Homotrimer. Requires Mg(2+) as cofactor.

Functionally, the phosphoenolpyruvate-dependent sugar phosphotransferase system (sugar PTS), a major carbohydrate active transport system, catalyzes the phosphorylation of incoming sugar substrates concomitantly with their translocation across the cell membrane. Involved in galactose transport with PtcB and Lmg_0963. The protein is PTS system galactose-specific EIIA component of Lactococcus lactis subsp. cremoris (strain MG1363).